Here is a 327-residue protein sequence, read N- to C-terminus: Thioredoxin reductase (327 aa).

Residues 10–13 (SGPA), 39–40 (IA), Gln-44, Asn-53, Val-86, Cys-143, Asp-286, and 293–295 (RQA) each bind FAD. Cys-140 and Cys-143 are joined by a disulfide.

Belongs to the class-II pyridine nucleotide-disulfide oxidoreductase family. Homodimer. Requires FAD as cofactor.

It is found in the cytoplasm. The catalysed reaction is [thioredoxin]-dithiol + NADP(+) = [thioredoxin]-disulfide + NADPH + H(+). Its function is as follows. Component of the thioredoxin-thioredoxin reductase system which may be involved in biosynthesis of penicillins and cephalosporins and may be important in determining the thiol-disulfide redox balance. This Pneumocystis jirovecii (Human pneumocystis pneumonia agent) protein is Thioredoxin reductase (TRR1).